The sequence spans 173 residues: Probable chemoreceptor glutamine deamidase CheD 2 (173 aa).

This sequence belongs to the CheD family.

The catalysed reaction is L-glutaminyl-[protein] + H2O = L-glutamyl-[protein] + NH4(+). Its function is as follows. Probably deamidates glutamine residues to glutamate on methyl-accepting chemotaxis receptors (MCPs), playing an important role in chemotaxis. This Albidiferax ferrireducens (strain ATCC BAA-621 / DSM 15236 / T118) (Rhodoferax ferrireducens) protein is Probable chemoreceptor glutamine deamidase CheD 2.